Reading from the N-terminus, the 227-residue chain is CDP-diacylglycerol--inositol 3-phosphatidyltransferase 1 (227 aa).

The next 2 membrane-spanning stretches (helical) occupy residues 12 to 36 (LSVYLYIPNIVGYMRVLLNCVAFAV) and 42 to 61 (PLFSVLYFFSFCCDAVDGWV). Residues Asp55 and Asp58 each contribute to the Mg(2+) site. Residues Gly59, Arg63, and Ser69 each coordinate a CDP-1,2-diacyl-sn-glycerol. Helical transmembrane passes span 73–95 (AVLDMVTDRVSTACLLVILSQIY), 101–122 (FLSLLALDIASHWLQMYSTFLA), 142–165 (YGNRIFMCYCCVSCEVLYIILLLI), and 177–200 (VVATLTQISPLSFLLALTLFGWSM). Positions 76 and 80 each coordinate Mg(2+). Asp80 (proton acceptor) is an active-site residue.

It belongs to the CDP-alcohol phosphatidyltransferase class-I family. Mg(2+) is required as a cofactor. The cofactor is Mn(2+). As to expression, expressed in stems, flowers, shoots and roots. Present in epidermal tissues.

It is found in the membrane. The enzyme catalyses a CDP-1,2-diacyl-sn-glycerol + myo-inositol = a 1,2-diacyl-sn-glycero-3-phospho-(1D-myo-inositol) + CMP + H(+). Functionally, catalyzes the biosynthesis of phosphatidylinositol (PtdIns) as well as PtdIns:inositol exchange reaction. May thus act to reduce an excessive cellular PtdIns content. The exchange activity is due to the reverse reaction of PtdIns synthase and is dependent on CMP, which is tightly bound to the enzyme. The protein is CDP-diacylglycerol--inositol 3-phosphatidyltransferase 1 (PIS1) of Arabidopsis thaliana (Mouse-ear cress).